Consider the following 101-residue polypeptide: uncharacterized protein (101 aa).

A signal peptide spans 1 to 25 (MISIPFRSTMSRTLVFIILPTVLSC).

This is an uncharacterized protein from Saccharomyces cerevisiae (strain ATCC 204508 / S288c) (Baker's yeast).